Reading from the N-terminus, the 154-residue chain is Myoglobin (154 aa).

The Globin domain maps to 2-148; that stretch reads GLSDGEWQLV…FRNDMAAKYK (147 aa). The residue at position 4 (Ser4) is a Phosphoserine. His65 contacts nitrite. His65 provides a ligand contact to O2. Thr68 is modified (phosphothreonine). Heme b is bound at residue His94.

It belongs to the globin family. Monomeric.

It localises to the cytoplasm. Its subcellular location is the sarcoplasm. The enzyme catalyses Fe(III)-heme b-[protein] + nitric oxide + H2O = Fe(II)-heme b-[protein] + nitrite + 2 H(+). It carries out the reaction H2O2 + AH2 = A + 2 H2O. In terms of biological role, monomeric heme protein which primary function is to store oxygen and facilitate its diffusion within muscle tissues. Reversibly binds oxygen through a pentacoordinated heme iron and enables its timely and efficient release as needed during periods of heightened demand. Depending on the oxidative conditions of tissues and cells, and in addition to its ability to bind oxygen, it also has a nitrite reductase activity whereby it regulates the production of bioactive nitric oxide. Under stress conditions, like hypoxia and anoxia, it also protects cells against reactive oxygen species thanks to its pseudoperoxidase activity. The polypeptide is Myoglobin (MB) (Callithrix jacchus (White-tufted-ear marmoset)).